A 438-amino-acid polypeptide reads, in one-letter code: V-type ATP synthase beta chain (438 aa).

Belongs to the ATPase alpha/beta chains family.

Its function is as follows. Produces ATP from ADP in the presence of a proton gradient across the membrane. The V-type beta chain is a regulatory subunit. The chain is V-type ATP synthase beta chain from Chlamydia abortus (strain DSM 27085 / S26/3) (Chlamydophila abortus).